The following is a 141-amino-acid chain: Hemoglobin D subunit alpha (141 aa).

Residues 1–141 (MLTEDDKQLI…VSAVLAEKYR (141 aa)) enclose the Globin domain. Histidine 58 is an O2 binding site. Histidine 87 serves as a coordination point for heme b.

Belongs to the globin family. Tetramer of two alpha chains and two beta chains. Red blood cells.

Its function is as follows. Involved in oxygen transport from the lung to the various peripheral tissues. The sequence is that of Hemoglobin D subunit alpha from Aldabrachelys gigantea (Aldabra giant tortoise).